Reading from the N-terminus, the 273-residue chain is Ribosomal RNA small subunit methyltransferase A (273 aa).

Residues asparagine 18, leucine 20, glycine 45, glutamate 66, aspartate 91, and asparagine 113 each contribute to the S-adenosyl-L-methionine site.

It belongs to the class I-like SAM-binding methyltransferase superfamily. rRNA adenine N(6)-methyltransferase family. RsmA subfamily.

Its subcellular location is the cytoplasm. It carries out the reaction adenosine(1518)/adenosine(1519) in 16S rRNA + 4 S-adenosyl-L-methionine = N(6)-dimethyladenosine(1518)/N(6)-dimethyladenosine(1519) in 16S rRNA + 4 S-adenosyl-L-homocysteine + 4 H(+). In terms of biological role, specifically dimethylates two adjacent adenosines (A1518 and A1519) in the loop of a conserved hairpin near the 3'-end of 16S rRNA in the 30S particle. May play a critical role in biogenesis of 30S subunits. In Shigella boydii serotype 18 (strain CDC 3083-94 / BS512), this protein is Ribosomal RNA small subunit methyltransferase A.